The following is a 285-amino-acid chain: Geranyl diphosphate 2-C-methyltransferase (285 aa).

The protein belongs to the geranyl diphosphate 2-C-methyltransferase family. Mg(2+) is required as a cofactor.

It catalyses the reaction (2E)-geranyl diphosphate + S-adenosyl-L-methionine = (E)-2-methylgeranyl diphosphate + S-adenosyl-L-homocysteine + H(+). Functionally, catalyzes the SAM-dependent methylation of geranyl diphosphate (GPP) to yield (E)-2-methylgeranyl diphosphate (2-MeGPP). This Saccharopolyspora erythraea (strain ATCC 11635 / DSM 40517 / JCM 4748 / NBRC 13426 / NCIMB 8594 / NRRL 2338) protein is Geranyl diphosphate 2-C-methyltransferase.